The sequence spans 85 residues: Hepcidin (85 aa).

The signal sequence occupies residues 1–22; sequence MALSTRIQAACLLLLLLASVAS. The propeptide occupies 23 to 54; sequence VSVLPHQTGQLTDLRAQDTAGAEAGLQPTLQL. 4 disulfides stabilise this stretch: C67/C83, C70/C73, C71/C79, and C74/C82.

It belongs to the hepcidin family. Interacts with SLC40A1; this interaction promotes SLC40A1 rapid ubiquitination.

The protein localises to the secreted. Its function is as follows. Liver-produced hormone that constitutes the main circulating regulator of iron absorption and distribution across tissues. Acts by promoting endocytosis and degradation of ferroportin/SLC40A1, leading to the retention of iron in iron-exporting cells and decreased flow of iron into plasma. Controls the major flows of iron into plasma: absorption of dietary iron in the intestine, recycling of iron by macrophages, which phagocytose old erythrocytes and other cells, and mobilization of stored iron from hepatocytes. Functionally, has strong antimicrobial activity against E.coli ML35P N.cinerea and weaker against S.epidermidis, S.aureus and group b streptococcus bacteria. Active against the fungus C.albicans. No activity against P.aeruginosa. This Canis lupus familiaris (Dog) protein is Hepcidin (HAMP).